Reading from the N-terminus, the 141-residue chain is Nucleoside diphosphate kinase (141 aa).

K10, F58, R86, T92, R103, and N113 together coordinate ATP. H116 (pros-phosphohistidine intermediate) is an active-site residue.

This sequence belongs to the NDK family. As to quaternary structure, homotetramer. Requires Mg(2+) as cofactor.

The protein resides in the cytoplasm. It carries out the reaction a 2'-deoxyribonucleoside 5'-diphosphate + ATP = a 2'-deoxyribonucleoside 5'-triphosphate + ADP. The catalysed reaction is a ribonucleoside 5'-diphosphate + ATP = a ribonucleoside 5'-triphosphate + ADP. Functionally, major role in the synthesis of nucleoside triphosphates other than ATP. The ATP gamma phosphate is transferred to the NDP beta phosphate via a ping-pong mechanism, using a phosphorylated active-site intermediate. In Ehrlichia canis (strain Jake), this protein is Nucleoside diphosphate kinase.